The following is a 495-amino-acid chain: Probable cytosol aminopeptidase (495 aa).

Mn(2+) contacts are provided by Lys266 and Asp271. The active site involves Lys278. Mn(2+) is bound by residues Asp289, Asp348, and Glu350. Arg352 is an active-site residue.

It belongs to the peptidase M17 family. Mn(2+) is required as a cofactor.

It is found in the cytoplasm. The enzyme catalyses Release of an N-terminal amino acid, Xaa-|-Yaa-, in which Xaa is preferably Leu, but may be other amino acids including Pro although not Arg or Lys, and Yaa may be Pro. Amino acid amides and methyl esters are also readily hydrolyzed, but rates on arylamides are exceedingly low.. It catalyses the reaction Release of an N-terminal amino acid, preferentially leucine, but not glutamic or aspartic acids.. Presumably involved in the processing and regular turnover of intracellular proteins. Catalyzes the removal of unsubstituted N-terminal amino acids from various peptides. This is Probable cytosol aminopeptidase from Pseudomonas aeruginosa (strain LESB58).